A 193-amino-acid polypeptide reads, in one-letter code: Guanylate kinase (193 aa).

Residues 12–191 form the Guanylate kinase-like domain; sequence DLLTIVAGPT…AANELWLAMN (180 aa). An ATP-binding site is contributed by 19–26; that stretch reads GPTAVGKG.

It belongs to the guanylate kinase family.

It localises to the cytoplasm. It carries out the reaction GMP + ATP = GDP + ADP. Essential for recycling GMP and indirectly, cGMP. The polypeptide is Guanylate kinase (Tropheryma whipplei (strain TW08/27) (Whipple's bacillus)).